A 492-amino-acid chain; its full sequence is N-succinylglutamate 5-semialdehyde dehydrogenase (492 aa).

G220–G225 is a binding site for NAD(+). Residues E243 and C277 contribute to the active site.

The protein belongs to the aldehyde dehydrogenase family. AstD subfamily.

The enzyme catalyses N-succinyl-L-glutamate 5-semialdehyde + NAD(+) + H2O = N-succinyl-L-glutamate + NADH + 2 H(+). It participates in amino-acid degradation; L-arginine degradation via AST pathway; L-glutamate and succinate from L-arginine: step 4/5. Functionally, catalyzes the NAD-dependent reduction of succinylglutamate semialdehyde into succinylglutamate. The chain is N-succinylglutamate 5-semialdehyde dehydrogenase from Shigella boydii serotype 18 (strain CDC 3083-94 / BS512).